We begin with the raw amino-acid sequence, 458 residues long: Argininosuccinate lyase (458 aa).

It belongs to the lyase 1 family. Argininosuccinate lyase subfamily.

The protein localises to the cytoplasm. The enzyme catalyses 2-(N(omega)-L-arginino)succinate = fumarate + L-arginine. It functions in the pathway amino-acid biosynthesis; L-arginine biosynthesis; L-arginine from L-ornithine and carbamoyl phosphate: step 3/3. In Haemophilus ducreyi (strain 35000HP / ATCC 700724), this protein is Argininosuccinate lyase.